The following is a 95-amino-acid chain: Antitoxin TacA1 (95 aa).

The tract at residues 59-95 (FNFNDEQYEEFINLLDAPVADDPVIEKLLARKPQWDV) is neutralization domain.

Belongs to the TacA antitoxin family. Homodimer. Forms a complex with cognate toxin TacT1. Forms a 4:2 antitoxin:toxin complex with cognate toxin TacT1.

In terms of biological role, antitoxin component of a type II toxin-antitoxin (TA) system. Counteracts the toxic effect of cognate toxin TacT1 (T8), but not TacT2 or TacT3. Plays a role in persister cell formation. Functionally, the TacA1-TacT1 complex binds (and probably represses) its own promoter DNA but not that of tacA3-tacT3, it does not repress the tacA3-tacT3 promoter. The polypeptide is Antitoxin TacA1 (Salmonella typhimurium (strain 14028s / SGSC 2262)).